We begin with the raw amino-acid sequence, 317 residues long: NAD-dependent protein deacetylase Sirt6 (317 aa).

The region spanning 27 to 273 is the Deacetylase sirtuin-type domain; sequence DEVVAEKCQE…SKVCKLLGVE (247 aa). Ala-53, Thr-57, Phe-64, Arg-65, Trp-71, Gln-113, and His-133 together coordinate NAD(+). The active-site Proton acceptor is His-133. Zn(2+) contacts are provided by Cys-141, Cys-144, Cys-166, and Cys-177. The NAD(+) site is built by Gly-215, Asn-241, Gln-243, and Val-259.

The protein belongs to the sirtuin family. Class IV subfamily. Zn(2+) serves as cofactor. Widely expressed.

It is found in the nucleus. The protein localises to the chromosome. It carries out the reaction N(6)-acetyl-L-lysyl-[protein] + NAD(+) + H2O = 2''-O-acetyl-ADP-D-ribose + nicotinamide + L-lysyl-[protein]. NAD-dependent histone deacylase that acts as a regulator of life span. This chain is NAD-dependent protein deacetylase Sirt6, found in Drosophila melanogaster (Fruit fly).